Reading from the N-terminus, the 236-residue chain is Coat protein (236 aa).

The tract at residues methionine 1–alanine 27 is disordered. Positions threonine 7 to alanine 27 are enriched in low complexity.

Belongs to the potexvirus capsid protein family.

It is found in the virion. Its function is as follows. Required for genome encapsidation. Forms ribonucleoprotein complexes along with TGB1 helicase and viral RNA. This Brassica campestris (Field mustard) protein is Coat protein.